The sequence spans 1086 residues: Isoleucine--tRNA ligase (1086 aa).

Positions 53–63 match the 'HIGH' region motif; the sequence is PFANGLPHYGH. The short motif at 624-628 is the 'KMSKS' region element; the sequence is KLSKR. Lys-627 provides a ligand contact to ATP.

Belongs to the class-I aminoacyl-tRNA synthetase family. IleS type 2 subfamily. As to quaternary structure, monomer. It depends on Zn(2+) as a cofactor.

Its subcellular location is the cytoplasm. It catalyses the reaction tRNA(Ile) + L-isoleucine + ATP = L-isoleucyl-tRNA(Ile) + AMP + diphosphate. Catalyzes the attachment of isoleucine to tRNA(Ile). As IleRS can inadvertently accommodate and process structurally similar amino acids such as valine, to avoid such errors it has two additional distinct tRNA(Ile)-dependent editing activities. One activity is designated as 'pretransfer' editing and involves the hydrolysis of activated Val-AMP. The other activity is designated 'posttransfer' editing and involves deacylation of mischarged Val-tRNA(Ile). The chain is Isoleucine--tRNA ligase from Rickettsia prowazekii (strain Madrid E).